The chain runs to 100 residues: uncharacterized protein (100 aa).

Positions 65–91 (DDRERHLSATGERRREQGFGTSRRKDP) are enriched in basic and acidic residues. Positions 65–100 (DDRERHLSATGERRREQGFGTSRRKDPSLYNWSDVK) are disordered.

It belongs to the chlamydial CPn_0121/CT_031/TC_0300 family.

This is an uncharacterized protein from Chlamydia trachomatis serovar D (strain ATCC VR-885 / DSM 19411 / UW-3/Cx).